The chain runs to 262 residues: MDGGHSPDRHAAAAAGEPVRSRWTPKPEQILILESIFNSGMVNPPKDETVRIRKLLERFGAVGDANVFYWFQNRRSRSRRRQRQLQAQAQAAAAAASSGSPPTASSGGLAPGHAGSPASSLGMFAHGAAGYSSSSSSSWPSSPPSVGMMMGDVDYGGGGDDLFAISRQMGYMDGGGGSSSSAAAGQHQQQQLYYSCQPATMTVFINGVATEVPRGPIDLRSMFGQDVMLVHSTGALLPANEYGILLHSLQMGESYFLVTRSS.

The span at 1–11 (MDGGHSPDRHA) shows a compositional bias: basic and acidic residues. Disordered regions lie at residues 1 to 21 (MDGGHSPDRHAAAAAGEPVRS) and 79 to 115 (RRRQRQLQAQAQAAAAAASSGSPPTASSGGLAPGHAG). A DNA-binding region (homeobox) is located at residues 18–82 (PVRSRWTPKP…NRRSRSRRRQ (65 aa)). Residues 84-112 (QLQAQAQAAAAAASSGSPPTASSGGLAPG) show a composition bias toward low complexity.

Belongs to the WUS homeobox family. As to quaternary structure, interacts with ERF3.

The protein resides in the nucleus. Functionally, transcription factor which may be involved in developmental processes. Promotes the development of crown roots (both initiation and elongation), main components of the fibrous root system, by regulating the expression of genes required for crown root development and hormone-responsive genes involved in cytokinin (e.g. RR1, RR2, RR3 and RR4) and auxin (e.g. IAA5, IAA11, IAA23 and IAA31) signaling. This chain is WUSCHEL-related homeobox 11, found in Oryza sativa subsp. indica (Rice).